We begin with the raw amino-acid sequence, 645 residues long: Pro-neuregulin-1, membrane-bound isoform (645 aa).

Positions 1-19 (MSERKEGRGKGKGKKKDRG) are excised as a propeptide. A disordered region spans residues 1-52 (MSERKEGRGKGKGKKKDRGSRGKPAPAEGDPSPALPPRLKEMKSQESAAGSK). Residues 20–247 (SRGKPAPAEG…MEAEELYQKR (228 aa)) lie on the Extracellular side of the membrane. Residues 37 to 128 (PRLKEMKSQE…GNDSASANIT (92 aa)) form the Ig-like C2-type domain. Cys57 and Cys112 are joined by a disulfide. Positions 139-164 (MSASTERPYVSSESPIRISVSTEGAN) are enriched in polar residues. Residues 139-175 (MSASTERPYVSSESPIRISVSTEGANTSSSTSTSTTG) are disordered. Over residues 165 to 175 (TSSSTSTSTTG) the composition is skewed to low complexity. Residues 178–222 (HLIKCAEKEKTFCVNGGECFMVKDLSNPSRYLCKCPNEFTGDRCQ) form the EGF-like domain. 3 disulfides stabilise this stretch: Cys182–Cys196, Cys190–Cys210, and Cys212–Cys221. Residues 248–268 (VLTITGICIALLVVGIMCVVA) traverse the membrane as a helical segment. The Cytoplasmic portion of the chain corresponds to 269–645 (YCKTKKQRQK…VIANQDPIAV (377 aa)). Residues 340-355 (SHYTSTAHHSTTVTQT) show a composition bias toward low complexity. 4 disordered regions span residues 340–364 (SHYTSTAHHSTTVTQTPSHSWSNGH), 380–406 (SVENSRHSSPAGGPRGRLHGLGGPREC), 433–463 (MTTPARMSPVDFHTPSSPKSPPSEMSPPVSS), and 531–593 (ETTQ…DTPF). Residues 392–402 (GPRGRLHGLGG) are compositionally biased toward gly residues. The segment covering 547–557 (TNSRRAKRTKP) has biased composition (basic residues). Over residues 568–579 (DSNPSSVSSNSE) the composition is skewed to low complexity.

Belongs to the neuregulin family. In terms of assembly, the cytoplasmic domain interacts with the LIM domain region of LIMK1. Forms a ternary complex with ERBB3 and ITGAV:ITGB3 or ITGA6:ITGB4. Interacts with NRDC and BACE1. Post-translationally, proteolytic cleavage close to the plasma membrane on the external face leads to the release of the soluble growth factor form. N- and O-glycosylated. Extensive glycosylation precedes the proteolytic cleavage.

The protein resides in the cell membrane. It localises to the secreted. In terms of biological role, direct ligand for ERBB3 and ERBB4 tyrosine kinase receptors. Concomitantly recruits ERBB1 and ERBB2 coreceptors, resulting in ligand-stimulated tyrosine phosphorylation and activation of the ERBB receptors. Perform diverse functions such as inducing growth and differentiation of epithelial, glial, neuronal, and skeletal muscle cells; inducing expression of acetylcholine receptor in synaptic vesicles during the formation of the neuromuscular junction; stimulating lobuloalveolar budding and milk production in the mammary gland and inducing differentiation of mammary tumor cells; stimulating Schwann cell proliferation; implication in the development of the myocardium such as trabeculation of the developing heart. Binds to ERBB4 and ERBB3. Acts as a ligand for integrins and binds (via EGF domain) to integrins ITGAV:ITGB3 or ITGA6:ITGB4. Its binding to integrins and subsequent ternary complex formation with integrins and ERRB3 are essential for NRG1-ERBB signaling. Induces the phosphorylation and activation of MAPK3/ERK1, MAPK1/ERK2 and AKT1, and ligand-dependent ERBB4 endocytosis is essential for the NRG1-mediated activation of these kinases in neurons. The chain is Pro-neuregulin-1, membrane-bound isoform from Mus musculus (Mouse).